The primary structure comprises 178 residues: MKIALSGKSGCGNTTVSSMIAKHYGLEFINYTFHDIARERNIPFSEFYEKEIIGRDDYYWDMYLDKRLSLLSKKNNTVLASRLAIWISKSADLKIYLYAKMEVRAERIMTREGGMYSDVLSSTFNRDENDKKRYLSIYNIDIDDYSSKTDLVIDVTNINSNEVFELIRDEIDKRNLKN.

7 to 15 (GKSGCGNTT) lines the ATP pocket.

Belongs to the cytidylate kinase family. Type 2 subfamily.

It localises to the cytoplasm. The catalysed reaction is CMP + ATP = CDP + ADP. It carries out the reaction dCMP + ATP = dCDP + ADP. The chain is Cytidylate kinase 2 from Borrelia garinii subsp. bavariensis (strain ATCC BAA-2496 / DSM 23469 / PBi) (Borreliella bavariensis).